A 104-amino-acid chain; its full sequence is Large ribosomal subunit protein bL21 (104 aa).

It belongs to the bacterial ribosomal protein bL21 family. Part of the 50S ribosomal subunit. Contacts protein L20.

This protein binds to 23S rRNA in the presence of protein L20. The polypeptide is Large ribosomal subunit protein bL21 (Clostridium botulinum (strain Kyoto / Type A2)).